The sequence spans 88 residues: Beta-insect excitatory toxin 1 (88 aa).

The signal sequence occupies residues 1–18 (MKFLLLFLVVLPIMGVFG). An LCN-type CS-alpha/beta domain is found at 20–83 (KNGYAVDSSG…ISDTRKSYCD (64 aa)). Intrachain disulfides connect Cys34/Cys55, Cys40/Cys60, Cys44/Cys62, and Cys56/Cys82.

The protein belongs to the long (4 C-C) scorpion toxin superfamily. Sodium channel inhibitor family. Beta subfamily. In terms of tissue distribution, expressed by the venom gland.

It is found in the secreted. Excitatory insect beta-toxins induce a spastic paralysis. They bind voltage-independently at site-4 of sodium channels (Nav) and shift the voltage of activation toward more negative potentials thereby affecting sodium channel activation and promoting spontaneous and repetitive firing. This toxin is active only on insects. The polypeptide is Beta-insect excitatory toxin 1 (Androctonus australis (Sahara scorpion)).